The following is a 1052-amino-acid chain: Membrane-bound transcription factor site-1 protease (1052 aa).

The first 17 residues, 1-17 (MKLVSTWLLVLVVLLCG), serve as a signal peptide directing secretion. The propeptide occupies 18–186 (KRHLGDRLGT…TGRHSSRRLL (169 aa)). N-linked (GlcNAc...) asparagine glycosylation is present at N148. S168 is subject to Phosphoserine. Topologically, residues 187–999 (RAIPRQVAQT…MPGRYNQEVG (813 aa)) are lumenal. The Peptidase S8 domain occupies 190–472 (PRQVAQTLQA…HGKLDLLRAY (283 aa)). The active-site Charge relay system is the D218. N236 carries N-linked (GlcNAc...) asparagine glycosylation. H249 serves as the catalytic Charge relay system. N305 is a glycosylation site (N-linked (GlcNAc...) asparagine). S414 serves as the catalytic Charge relay system. N515 and N728 each carry an N-linked (GlcNAc...) asparagine glycan. Residues 877–887 (PSLSHSGNRQR) show a composition bias toward polar residues. The interval 877–900 (PSLSHSGNRQRPPSGAGLAPPERM) is disordered. A glycan (N-linked (GlcNAc...) asparagine) is linked at N939. Residues 1000 to 1022 (QTIPVFAFLGAMVALAFFVVQIS) form a helical membrane-spanning segment. At 1023 to 1052 (KAKSRPKRRRPRAKRPQLAQQAHPARTPSV) the chain is on the cytoplasmic side. A compositionally biased stretch (basic residues) spans 1026–1037 (SRPKRRRPRAKR). Positions 1026-1052 (SRPKRRRPRAKRPQLAQQAHPARTPSV) are disordered.

Belongs to the peptidase S8 family. In terms of assembly, interacts with LYSET; this interaction bridges GNPTAB to MBTPS1. It depends on Ca(2+) as a cofactor. Post-translationally, the 148 kDa zymogen is processed progressively into two membrane-bound 120 and 106 kDa forms in the endoplasmic reticulum, and late into a secreted 98 kDa form. The propeptide is autocatalytically removed through an intramolecular cleavage after Leu-186. Further cleavage generates 14, 10, and 8 kDa intermediates.

The protein localises to the endoplasmic reticulum membrane. It localises to the golgi apparatus membrane. The catalysed reaction is Processes precursors containing basic and hydrophobic/aliphatic residues at P4 and P2, respectively, with a relatively relaxed acceptance of amino acids at P1 and P3.. With respect to regulation, inhibited by divalent copper and zinc ions, but not by nickel or cobalt. Inhibited by its prosegment, but not smaller fragments. Inhibited by 4-(2-aminoethyl)benzenesulfonyl fluoride (AEBSF), a serine protease inhibitor. Functionally, serine protease that cleaves after hydrophobic or small residues, provided that Arg or Lys is in position P4: known substrates include SREBF1/SREBP1, SREBF2/SREBP2, BDNF, GNPTAB, ATF6, ATF6B and FAM20C. Cleaves substrates after Arg-Ser-Val-Leu (SREBP2), Arg-His-Leu-Leu (ATF6), Arg-Gly-Leu-Thr (BDNF) and its own propeptide after Arg-Arg-Leu-Leu. Catalyzes the first step regulated intramembrane proteolysis activation of the sterol regulatory element-binding proteins (SREBPs) SREBF1/SREBP1 and SREBF2/SREBP2. Also mediates the first step of the regulated intramembrane proteolytic activation of the cyclic AMP-dependent transcription factor ATF-6 (ATF6 and ATF6B). Mediates the protein cleavage of GNPTAB into subunit alpha and beta, thereby participating in biogenesis of lysosomes. Cleaves the propeptide from FAM20C which is required for FAM20C secretion from the Golgi apparatus membrane and for enhancement of FAM20C kinase activity, promoting osteoblast differentiation and biomineralization. Involved in the regulation of M6P-dependent Golgi-to-lysosome trafficking of lysosomal enzymes. It is required for the activation of CREB3L2/BBF2H7, a transcriptional activator of MIA3/TANGO and other genes controlling mega vesicle formation. Therefore, it plays a key role in the regulation of mega vesicle-mediated collagen trafficking. In astrocytes and osteoblasts, upon DNA damage and ER stress, mediates the first step of the regulated intramembrane proteolytic activation of the transcription factor CREB3L1, leading to the inhibition of cell-cycle progression. In Mus musculus (Mouse), this protein is Membrane-bound transcription factor site-1 protease (Mbtps1).